Consider the following 270-residue polypeptide: uncharacterized protein (270 aa).

This sequence belongs to the GSP E family.

This is an uncharacterized protein from Methanocaldococcus jannaschii (strain ATCC 43067 / DSM 2661 / JAL-1 / JCM 10045 / NBRC 100440) (Methanococcus jannaschii).